The primary structure comprises 250 residues: Thermostable monoacylglycerol lipase (250 aa).

Phe29 lines the substrate pocket. Ser97 serves as the catalytic Nucleophile. Met98 contributes to the substrate binding site. Catalysis depends on charge relay system residues Asp196 and His226.

The protein belongs to the lipase/esterase LIP3/BchO family. As to quaternary structure, monomer.

It carries out the reaction Hydrolyzes glycerol monoesters of long-chain fatty acids.. Not inhibited by cholate, but slightly inhibited by triton X-100 and deoxycholate. Completely inhibited by PMSF (phenylmethylsulfonyl fluoride) at a concentration of 200 uM. Functionally, hydrolyzes monoacylglycerols, with the highest activity occurring with 1-monolauroylglycerol. The chain is Thermostable monoacylglycerol lipase from Bacillus sp. (strain H-257).